Consider the following 790-residue polypeptide: Tumor necrosis factor alpha-induced protein 3 (790 aa).

At A2 the chain carries N-acetylalanine. Residues 58–300 (PQFREIIHKA…LTDPENEMKE (243 aa)) form a TRAF-binding region. The 172-residue stretch at 92–263 (LVALKTNGDG…SHHFVPLVTL (172 aa)) folds into the OTU domain. D100 is an active-site residue. C103 (nucleophile) is an active-site residue. Interaction with ubiquitin regions lie at residues 157 to 159 (LCY), 190 to 192 (SLE), and 224 to 227 (FAPL). H256 functions as the Proton acceptor in the catalytic mechanism. A compositionally biased stretch (basic and acidic residues) spans 357-368 (QENSEQGRREGH). The disordered stretch occupies residues 357-377 (QENSEQGRREGHAQNPMEPSV). An interaction with TNIP1 region spans residues 369–775 (AQNPMEPSVP…ACDHFGNAKC (407 aa)). The segment at 381 to 416 (SLMDVKCETPNCPFFMSVNTQPLCHECSERRQKNQN) adopts an A20-type 1 zinc-finger fold. The segment at 386–453 (KCETPNCPFF…EPLAWNPEES (68 aa)) is interaction with RIPK1. Zn(2+)-binding residues include C387, C392, C404, and C407. 2 disordered regions span residues 415 to 434 (QNKLPKLNSKPGPEGLPGMA) and 447 to 468 (AWNPEESTGGPHSAPPTAPSPF). S459 is modified (phosphoserine). A20-type zinc fingers lie at residues 472–507 (ETTAMKCRSPGCPFTLNVQHNGFCERCHNARQLHAS) and 515–548 (HLDPGKCQACLQDVTRTFNGICSTCFKRTTAEAS). The Zn(2+) site is built by C478, C483, C495, C498, C521, C524, C536, and C539. Residues 550 to 583 (SLSTSLPPSCHQRSKSDPSRLVRSPSPHSCHRAG) are disordered. Residue S575 is modified to Phosphoserine. Residues 601-636 (RTGTSKCRKAGCVYFGTPENKGFCTLCFIEYRENKH) form an A20-type 4 zinc finger. Residues 605-655 (SKCRKAGCVYFGTPENKGFCTLCFIEYRENKHFAAASGKVSPTASRFQNTI) form a required for proteasomal degradation of UBE2N and UBE2D3, TRAF6 deubiquitination, and TAX1BP1 interaction with UBE2N region. The segment at 606–790 (KCRKAGCVYF…ECFQFKQMYG (185 aa)) is sufficient for inhibitory activity of TNF-induced NF-kappa-B activity. The Zn(2+) site is built by C607, C612, C624, and C627. At S645 the chain carries Phosphoserine. The A20-type 5 zinc finger occupies 651–686 (FQNTIPCLGRECGTLGSTMFEGYCQKCFIEAQNQRF). Positions 657, 662, 674, and 677 each coordinate Zn(2+). Residues 689–705 (AKRTEEQLRSSQRRDVP) show a composition bias toward basic and acidic residues. A disordered region spans residues 689–712 (AKRTEEQLRSSQRRDVPRTTQSTS). The tract at residues 697–790 (RSSQRRDVPR…ECFQFKQMYG (94 aa)) is required for lysosomal localization and for TRAF2 lysosomal degradation. 2 A20-type zinc fingers span residues 710–745 (STSRPKCARASCKNILACRSEELCMECQHPNQRMGP) and 756–790 (DPPKQRCRAPACDHFGNAKCNGYCNECFQFKQMYG). C716, C721, C733, C736, C762, C767, C779, and C782 together coordinate Zn(2+).

The protein belongs to the peptidase C64 family. As to quaternary structure, homodimer. Interacts with TNIP1, TAX1BP1 and TRAF2. Interacts with RNF11, ITCH and TAX1BP1 only after TNF stimulation; these interaction are transient and they are lost after 1 hour of stimulation with TNF. Interacts with YWHAZ and YWHAH. Interacts with IKBKG; the interaction is induced by TNF stimulation and by polyubiquitin. Interacts with RIPK1. Interacts with UBE2N; the interaction requires TAX1BP1. Interacts with TRAF6; the interaction is inhibited by HTLV-1 protein Tax. Post-translationally, proteolytically cleaved by MALT1 upon TCR stimulation; disrupts NF-kappa-B inhibitory function and results in increased IL-2 production. It is proposed that only a fraction of TNFAIP3 colocalized with TCR and CBM complex is cleaved, leaving the main TNFAIP3 pool intact.

The protein resides in the cytoplasm. It is found in the nucleus. It localises to the lysosome. It catalyses the reaction Thiol-dependent hydrolysis of ester, thioester, amide, peptide and isopeptide bonds formed by the C-terminal Gly of ubiquitin (a 76-residue protein attached to proteins as an intracellular targeting signal).. Functionally, ubiquitin-editing enzyme that contains both ubiquitin ligase and deubiquitinase activities. Involved in immune and inflammatory responses signaled by cytokines, such as TNF-alpha and IL-1 beta, or pathogens via Toll-like receptors (TLRs) through terminating NF-kappa-B activity. Essential component of a ubiquitin-editing protein complex, comprising also RNF11, ITCH and TAX1BP1, that ensures the transient nature of inflammatory signaling pathways. In cooperation with TAX1BP1 promotes disassembly of E2-E3 ubiquitin protein ligase complexes in IL-1R and TNFR-1 pathways; affected are at least E3 ligases TRAF6, TRAF2 and BIRC2, and E2 ubiquitin-conjugating enzymes UBE2N and UBE2D3. In cooperation with TAX1BP1 promotes ubiquitination of UBE2N and proteasomal degradation of UBE2N and UBE2D3. Upon TNF stimulation, deubiquitinates 'Lys-63'-polyubiquitin chains on RIPK1 and catalyzes the formation of 'Lys-48'-polyubiquitin chains. This leads to RIPK1 proteasomal degradation and consequently termination of the TNF- or LPS-mediated activation of NF-kappa-B. Deubiquitinates TRAF6 probably acting on 'Lys-63'-linked polyubiquitin. Upon T-cell receptor (TCR)-mediated T-cell activation, deubiquitinates 'Lys-63'-polyubiquitin chains on MALT1 thereby mediating disassociation of the CBM (CARD11:BCL10:MALT1) and IKK complexes and preventing sustained IKK activation. Deubiquitinates NEMO/IKBKG; the function is facilitated by TNIP1 and leads to inhibition of NF-kappa-B activation. Upon stimulation by bacterial peptidoglycans, probably deubiquitinates RIPK2. Can also inhibit I-kappa-B-kinase (IKK) through a non-catalytic mechanism which involves polyubiquitin; polyubiquitin promotes association with IKBKG and prevents IKK MAP3K7-mediated phosphorylation. Targets TRAF2 for lysosomal degradation. In vitro able to deubiquitinate 'Lys-11'-, 'Lys-48'- and 'Lys-63' polyubiquitin chains. Inhibitor of programmed cell death. Has a role in the function of the lymphoid system. Required for LPS-induced production of pro-inflammatory cytokines and IFN beta in LPS-tolerized macrophages. The sequence is that of Tumor necrosis factor alpha-induced protein 3 (TNFAIP3) from Homo sapiens (Human).